A 330-amino-acid chain; its full sequence is Protoheme IX farnesyltransferase (330 aa).

9 consecutive transmembrane segments (helical) span residues 30–50 (LVKPKIIALLLMTTAGAMWMA), 58–78 (FFITLLGGGIAAAAANVINMV), 106–126 (LIFSGILALAAFGLLAIFTNL), 127–147 (LAAGLAMSGILVYVGVYTHWL), 155–175 (IVIGGAAGAIPPLVGWAATTG), 182–202 (WVMFAIIFLWTPPHFWALAIL), 228–248 (ILLYALLMVPVSLLLVYPLGM), 249–269 (LGSFYLSAAALLGSLLVWKAV), and 281–301 (AASLFTFANLYLLLLCGAMGL).

This sequence belongs to the UbiA prenyltransferase family. Protoheme IX farnesyltransferase subfamily.

Its subcellular location is the cell inner membrane. The catalysed reaction is heme b + (2E,6E)-farnesyl diphosphate + H2O = Fe(II)-heme o + diphosphate. It participates in porphyrin-containing compound metabolism; heme O biosynthesis; heme O from protoheme: step 1/1. Converts heme B (protoheme IX) to heme O by substitution of the vinyl group on carbon 2 of heme B porphyrin ring with a hydroxyethyl farnesyl side group. The protein is Protoheme IX farnesyltransferase of Synechococcus sp. (strain JA-2-3B'a(2-13)) (Cyanobacteria bacterium Yellowstone B-Prime).